The chain runs to 331 residues: Isopentenyl-diphosphate delta-isomerase (331 aa).

4–5 (RK) contributes to the substrate binding site. FMN contacts are provided by residues 59 to 61 (AMT), Ser-89, and Asn-116. Gln-146 contacts substrate. Position 147 (Glu-147) interacts with Mg(2+). FMN-binding positions include Lys-178, Ser-203, Thr-208, 252–254 (GIR), and 273–274 (SR).

Belongs to the IPP isomerase type 2 family. Homooctamer. Dimer of tetramers. It depends on FMN as a cofactor. The cofactor is NADPH. Requires Mg(2+) as cofactor.

The protein resides in the cytoplasm. The enzyme catalyses isopentenyl diphosphate = dimethylallyl diphosphate. Its function is as follows. Involved in the biosynthesis of isoprenoids. Catalyzes the 1,3-allylic rearrangement of the homoallylic substrate isopentenyl (IPP) to its allylic isomer, dimethylallyl diphosphate (DMAPP). This is Isopentenyl-diphosphate delta-isomerase from Streptococcus mutans serotype c (strain ATCC 700610 / UA159).